The sequence spans 466 residues: Coproporphyrinogen III oxidase (466 aa).

Residues 9–14, 34–35, lysine 42, 56–59, valine 254, and 446–448 contribute to the FAD site; these read GAGITG, EA, GPES, and VGL.

It belongs to the protoporphyrinogen/coproporphyrinogen oxidase family. Coproporphyrinogen III oxidase subfamily. Requires FAD as cofactor.

The protein resides in the cytoplasm. It carries out the reaction coproporphyrinogen III + 3 O2 = coproporphyrin III + 3 H2O2. Its pathway is porphyrin-containing compound metabolism; protoheme biosynthesis. Its activity is regulated as follows. The generation of protoporphyrin IX, but not coproporphyrin III, is stimulated by heme-bound HemQ. This stimulatory effect is mediated by superoxide. Inhibited by acifluorfen analogs. In terms of biological role, involved in coproporphyrin-dependent heme b biosynthesis. Catalyzes the oxidation of coproporphyrinogen III to coproporphyrin III. Can also oxidize protoporphyrinogen IX. This Staphylococcus aureus (strain NCTC 8325 / PS 47) protein is Coproporphyrinogen III oxidase.